The following is a 414-amino-acid chain: Gamma-glutamyl phosphate reductase (414 aa).

Belongs to the gamma-glutamyl phosphate reductase family.

It is found in the cytoplasm. It carries out the reaction L-glutamate 5-semialdehyde + phosphate + NADP(+) = L-glutamyl 5-phosphate + NADPH + H(+). It functions in the pathway amino-acid biosynthesis; L-proline biosynthesis; L-glutamate 5-semialdehyde from L-glutamate: step 2/2. Functionally, catalyzes the NADPH-dependent reduction of L-glutamate 5-phosphate into L-glutamate 5-semialdehyde and phosphate. The product spontaneously undergoes cyclization to form 1-pyrroline-5-carboxylate. The polypeptide is Gamma-glutamyl phosphate reductase (Bacillus anthracis (strain A0248)).